A 98-amino-acid polypeptide reads, in one-letter code: Defensin-like protein 192 (98 aa).

An N-terminal signal peptide occupies residues 1 to 27 (MATKSVSTFAIFFILVLAIFETPEIEA). Disulfide bonds link Cys-32/Cys-86, Cys-45/Cys-69, Cys-54/Cys-81, and Cys-58/Cys-83.

Belongs to the DEFL family. Protease inhibitor I18 (RTI/MTI-2) subfamily.

It is found in the secreted. The polypeptide is Defensin-like protein 192 (ATTI7) (Arabidopsis thaliana (Mouse-ear cress)).